Here is a 337-residue protein sequence, read N- to C-terminus: Transcription initiation factor IIB (337 aa).

The segment at 37–68 adopts a TFIIB-type zinc-finger fold; the sequence is YTVECPECGSRALVRDYERAELVCSECGLVID. Zn(2+) contacts are provided by Cys-41, Cys-44, Cys-60, and Cys-63. 2 tandem repeats follow at residues 154–237 and 248–329.

It belongs to the TFIIB family.

Its function is as follows. Stabilizes TBP binding to an archaeal box-A promoter. Also responsible for recruiting RNA polymerase II to the pre-initiation complex (DNA-TBP-TFIIB). The sequence is that of Transcription initiation factor IIB from Methanothrix thermoacetophila (strain DSM 6194 / JCM 14653 / NBRC 101360 / PT) (Methanosaeta thermophila).